The sequence spans 708 residues: Capsid scaffolding protein (708 aa).

Catalysis depends on charge relay system residues His63, Ser132, and His157. 3 disordered regions span residues 270–339 (SAER…MSHP), 455–565 (HPSY…QQQR), and 593–620 (ALPSAASSSPTTTTVCTPTSELTSGGGE). Positions 284–293 (PAAGARVPSS) are enriched in low complexity. The span at 294–311 (SPSPPVEPPSPVQPPALP) shows a compositional bias: pro residues. Over residues 326-339 (SPSEPAEAASMSHP) the composition is skewed to low complexity. Residues 333-352 (AASMSHPLSAAVPAATAPPG) are interaction with pAP. The segment covering 498 to 513 (KQHRHGGSGGHNKRRK) has biased composition (basic residues). 2 consecutive short sequence motifs (nuclear localization signal) follow at residues 510 to 515 (KRRKET) and 537 to 543 (RARKRLK). The segment covering 593–615 (ALPSAASSSPTTTTVCTPTSELT) has biased composition (low complexity). Residues 688–708 (PPKDMVDLNRRIFVAALNKLE) form an interaction with major capsid protein region.

It belongs to the herpesviridae capsid scaffolding protein family. As to quaternary structure, homomultimer. Interacts with major capsid protein. Exists in a monomer-dimer equilibrium with the dimer being the active species. In terms of processing, capsid scaffolding protein is cleaved by assemblin after formation of the spherical procapsid. As a result, the capsid obtains its mature, icosahedral shape. Cleavages occur at two or more sites: release (R-site) and maturation (M-site).

The protein resides in the host cytoplasm. It is found in the host nucleus. The enzyme catalyses Cleaves -Ala-|-Ser- and -Ala-|-Ala- bonds in the scaffold protein.. Its function is as follows. Acts as a scaffold protein by binding major capsid protein in the cytoplasm, inducing the nuclear localization of both proteins. Multimerizes in the nucleus such as major capsid protein forms the icosahedral T=16 capsid. Autocatalytic cleavage releases the assembly protein, and subsequently abolishes interaction with major capsid protein. Cleavages products are evicted from the capsid before or during DNA packaging. Functionally, protease that plays an essential role in virion assembly within the nucleus. Catalyzes the cleavage of the assembly protein after formation of the spherical procapsid. By that cleavage, the capsid matures and gains its icosahedral shape. The cleavage sites seem to include -Ala-Ser-, -Ala-Ala-, as well as Ala-Thr bonds. Assemblin and cleavages products are evicted from the capsid before or during DNA packaging. In terms of biological role, plays a major role in capsid assembly. Acts as a scaffold protein by binding major capsid protein. Multimerizes in the nucleus such as major capsid protein forms the icosahedral T=16 capsid. Cleaved by assemblin after capsid completion. The cleavages products are evicted from the capsid before or during DNA packaging. This Homo sapiens (Human) protein is Capsid scaffolding protein (UL80).